A 221-amino-acid polypeptide reads, in one-letter code: MKTITTDWELIPYSEAWSRQTEWFDALVHAKQNGESYENRIIFCEHPHVYTLGRSGKENNMLLGEEQLKTIGATLYHIDRGGDITYHGPGQLVCYPILNLEEFGLGLKEYVHLLEEAVIRVCASYGVVAGRLEKATGVWLEGDTSRARKICAIGVRSSHYVTMHGLALNVNTDLRYFSYIHPCGFIDKGVTSLQQELGHSIDMAEVKERLGRELLAALLSK.

In terms of domain architecture, BPL/LPL catalytic spans 35–221; that stretch reads ESYENRIIFC…RELLAALLSK (187 aa). Substrate is bound by residues 80 to 87, 152 to 154, and 165 to 167; these read RGGDITYH, AIG, and GLA. Cys-183 acts as the Acyl-thioester intermediate in catalysis.

This sequence belongs to the LipB family.

It localises to the cytoplasm. The enzyme catalyses octanoyl-[ACP] + L-lysyl-[protein] = N(6)-octanoyl-L-lysyl-[protein] + holo-[ACP] + H(+). It functions in the pathway protein modification; protein lipoylation via endogenous pathway; protein N(6)-(lipoyl)lysine from octanoyl-[acyl-carrier-protein]: step 1/2. Catalyzes the transfer of endogenously produced octanoic acid from octanoyl-acyl-carrier-protein onto the lipoyl domains of lipoate-dependent enzymes. Lipoyl-ACP can also act as a substrate although octanoyl-ACP is likely to be the physiological substrate. The protein is Octanoyltransferase of Bacteroides fragilis (strain ATCC 25285 / DSM 2151 / CCUG 4856 / JCM 11019 / LMG 10263 / NCTC 9343 / Onslow / VPI 2553 / EN-2).